We begin with the raw amino-acid sequence, 198 residues long: Elongation factor Ts (198 aa).

The interval 81-84 (TDFV) is involved in Mg(2+) ion dislocation from EF-Tu.

Belongs to the EF-Ts family.

The protein localises to the cytoplasm. Associates with the EF-Tu.GDP complex and induces the exchange of GDP to GTP. It remains bound to the aminoacyl-tRNA.EF-Tu.GTP complex up to the GTP hydrolysis stage on the ribosome. The polypeptide is Elongation factor Ts (Herpetosiphon aurantiacus (strain ATCC 23779 / DSM 785 / 114-95)).